The sequence spans 384 residues: Putative aminohydrolase MTH_994 (384 aa).

Zn(2+)-binding residues include H60, H62, H207, and D291.

It belongs to the metallo-dependent hydrolases superfamily. ATZ/TRZ family.

The protein is Putative aminohydrolase MTH_994 of Methanothermobacter thermautotrophicus (strain ATCC 29096 / DSM 1053 / JCM 10044 / NBRC 100330 / Delta H) (Methanobacterium thermoautotrophicum).